The chain runs to 134 residues: Large ribosomal subunit protein bL17 (134 aa).

This sequence belongs to the bacterial ribosomal protein bL17 family. As to quaternary structure, part of the 50S ribosomal subunit. Contacts protein L32.

The sequence is that of Large ribosomal subunit protein bL17 from Paracidovorax citrulli (strain AAC00-1) (Acidovorax citrulli).